The sequence spans 619 residues: Keratin, type II cytoskeletal 1 (619 aa).

A head region spans residues 1-180 (MSRHFSSRSG…DPEIQKVKTR (180 aa)). Position 12 is an omega-N-methylarginine (R12). 2 positions are modified to phosphoserine: S18 and S21. The segment at 28-49 (QRRTTSSSVRHSGGGGGRFSGG) is disordered. Residues 39–49 (SGGGGGRFSGG) show a composition bias toward gly residues. R45 is modified (omega-N-methylarginine). Phosphoserine is present on S68. Residues 173 to 477 (EIQKVKTRER…ELMNTKLALD (305 aa)) are a coiled coil. A coil 1A region spans residues 181–216 (EREQIKSLNNQFASFIDKVRFLEQQNQVLQTKWELL). One can recognise an IF rod domain in the interval 181-494 (EREQIKSLNN…TLLEGEESRM (314 aa)). Positions 217–235 (QQVDTSTRTHSLEPYFENY) are linker 1. The coil 1B stretch occupies residues 236–327 (ISNLRRRVDQ…TLYQAELSQM (92 aa)). K277 is subject to N6,N6-dimethyllysine. The linker 12 stretch occupies residues 328–351 (QTQISETNVILSMDNNRSLDLDSI). Phosphoserine is present on S345. The tract at residues 352-490 (ISEVKAQYEE…ATYRTLLEGE (139 aa)) is coil 2. The segment at 491–619 (ESRMSGECAP…VSTSYSRAVR (129 aa)) is tail. R519 and R575 each carry omega-N-methylarginine. The segment at 559 to 619 (GGGGGGYGSS…VSTSYSRAVR (61 aa)) is disordered. Over residues 573-595 (GHRGGSGGGSRSGGSSGGRGSSS) the composition is skewed to gly residues. Low complexity predominate over residues 596–606 (GGIKTSSGSSS). Polar residues predominate over residues 607-619 (VKFVSTSYSRAVR).

This sequence belongs to the intermediate filament family. As to quaternary structure, heterotetramer of two type I and two type II keratins. Heterodimer with KRT10. Two heterodimers of KRT1 and KRT10 form a heterotetramer. Forms a heterodimer with KRT14; the interaction is more abundant in the absence of KRT5. Interacts with ITGB1 in the presence of RACK1 and SRC, and with RACK1. Interacts with C1QBP; the association represents a cell surface kininogen receptor. Interacts with EPPK1; interaction is dependent of higher-order structure of intermediate filament. Post-translationally, undergoes deimination of some arginine residues (citrullination).

It is found in the cell membrane. The protein resides in the cytoplasm. Its function is as follows. May regulate the activity of kinases such as PKC and SRC via binding to integrin beta-1 (ITB1) and the receptor of activated protein C kinase 1 (RACK1). In complex with C1QBP is a high affinity receptor for kininogen-1/HMWK. This chain is Keratin, type II cytoskeletal 1, found in Canis lupus familiaris (Dog).